The primary structure comprises 210 residues: Placenta-expressed transcript 1 protein (210 aa).

A signal peptide spans 1–26; the sequence is MAVLGSPLLPLRLFLCFGLLFFSASC. The Extracellular portion of the chain corresponds to 27 to 189; that stretch reads TDHPDQCMIF…THKNSANRVF (163 aa). Asn67 and Asn94 each carry an N-linked (GlcNAc...) asparagine glycan. A helical transmembrane segment spans residues 190-209; the sequence is RSPVRDAIQILLAFLTSKLL. Residue Phe210 is a topological domain, cytoplasmic.

In terms of tissue distribution, highly expressed in placenta.

It localises to the membrane. It is found in the apical cell membrane. In terms of biological role, modulates leading keratinocyte migration and cellular adhesion to matrix proteins during a wound-healing response and promotes wound repair. May play a role during trichilemmal differentiation of the hair follicle. The protein is Placenta-expressed transcript 1 protein (PLET1) of Sus scrofa (Pig).